Here is a 560-residue protein sequence, read N- to C-terminus: (E)-beta-farnesene synthase (560 aa).

Residues Asp312, Asp316, Asp457, and Glu465 each contribute to the Mg(2+) site. The DDXXD motif signature appears at 312–316 (DDTFD).

This sequence belongs to the terpene synthase family. The cofactor is Mg(2+). It depends on Co(2+) as a cofactor. Mn(2+) serves as cofactor.

It localises to the cytoplasm. It carries out the reaction (2E,6E)-farnesyl diphosphate = (E)-beta-farnesene + diphosphate. It functions in the pathway secondary metabolite biosynthesis; terpenoid biosynthesis. Sesquiterpene cyclase catalyzing the production of beta-farnesene from farnesyl diphosphate. The protein is (E)-beta-farnesene synthase of Citrus junos (Yuzu).